The primary structure comprises 187 residues: Ras-like protein rasD (187 aa).

10–17 (GGGGVGKS) is a binding site for GTP. An Effector region motif is present at residues 32–40 (YDPTIEDSY). Residues 57–61 (DTAGQ) and 116–119 (NKAD) contribute to the GTP site. Cysteine 184 bears the Cysteine methyl ester mark. Cysteine 184 is lipidated: S-geranylgeranyl cysteine. The propeptide at 185–187 (LIL) is removed in mature form.

This sequence belongs to the small GTPase superfamily. Ras family.

The protein localises to the cell membrane. The catalysed reaction is GTP + H2O = GDP + phosphate + H(+). Its activity is regulated as follows. Alternates between an inactive form bound to GDP and an active form bound to GTP. Activated by a guanine nucleotide-exchange factor (GEF) and inactivated by a GTPase-activating protein (GAP). In terms of biological role, ras proteins bind GDP/GTP and possess intrinsic GTPase activity. The sequence is that of Ras-like protein rasD (rasD) from Dictyostelium discoideum (Social amoeba).